A 571-amino-acid chain; its full sequence is Proline--tRNA ligase (571 aa).

This sequence belongs to the class-II aminoacyl-tRNA synthetase family. ProS type 1 subfamily. Homodimer.

Its subcellular location is the cytoplasm. The enzyme catalyses tRNA(Pro) + L-proline + ATP = L-prolyl-tRNA(Pro) + AMP + diphosphate. In terms of biological role, catalyzes the attachment of proline to tRNA(Pro) in a two-step reaction: proline is first activated by ATP to form Pro-AMP and then transferred to the acceptor end of tRNA(Pro). As ProRS can inadvertently accommodate and process non-cognate amino acids such as alanine and cysteine, to avoid such errors it has two additional distinct editing activities against alanine. One activity is designated as 'pretransfer' editing and involves the tRNA(Pro)-independent hydrolysis of activated Ala-AMP. The other activity is designated 'posttransfer' editing and involves deacylation of mischarged Ala-tRNA(Pro). The misacylated Cys-tRNA(Pro) is not edited by ProRS. This Shewanella baltica (strain OS195) protein is Proline--tRNA ligase.